Here is an 843-residue protein sequence, read N- to C-terminus: Glycogen phosphorylase, brain form (843 aa).

Ala-2 bears the N-acetylalanine mark. Ser-15 carries the phosphoserine; by PHK; in form phosphorylase A modification. Residues Asp-43, Tyr-197, and Arg-310 each coordinate AMP. Phosphotyrosine is present on Tyr-197. Tyr-473 carries the phosphotyrosine modification. Residue Lys-569 participates in pyridoxal 5'-phosphate binding. The tract at residues 677–678 (TG) is pyridoxal 5'-phosphate. Lys-681 carries the post-translational modification N6-(pyridoxal phosphate)lysine.

Belongs to the glycogen phosphorylase family. Homodimer. Dimers associate into a tetramer to form the enzymatically active phosphorylase A. Pyridoxal 5'-phosphate is required as a cofactor. Post-translationally, phosphorylation of Ser-15 converts phosphorylase B (unphosphorylated) to phosphorylase A.

The catalysed reaction is [(1-&gt;4)-alpha-D-glucosyl](n) + phosphate = [(1-&gt;4)-alpha-D-glucosyl](n-1) + alpha-D-glucose 1-phosphate. With respect to regulation, activity of phosphorylase is controlled both by allosteric means (through the non-covalent binding of metabolites) and by covalent modification. Thus AMP allosterically activates, whereas ATP, ADP, and glucose-6-phosphate allosterically inhibit, phosphorylase B. Its function is as follows. Glycogen phosphorylase that regulates glycogen mobilization. Phosphorylase is an important allosteric enzyme in carbohydrate metabolism. Enzymes from different sources differ in their regulatory mechanisms and in their natural substrates. However, all known phosphorylases share catalytic and structural properties. In Pongo abelii (Sumatran orangutan), this protein is Glycogen phosphorylase, brain form (PYGB).